Consider the following 609-residue polypeptide: PTS system beta-glucoside-specific EIIBCA component (609 aa).

A PTS EIIB type-1 domain is found at 1-86 (MDYDKLSKDI…VRHSNLSDEK (86 aa)). Cys26 functions as the Phosphocysteine intermediate; for EIIB activity in the catalytic mechanism. The region spanning 103–459 (DVISGVFTPI…GSQQPAVHEG (357 aa)) is the PTS EIIC type-1 domain. Transmembrane regions (helical) follow at residues 112–132 (ILPA…AVTF), 141–161 (VHVI…LLLA), 174–194 (VAAA…LGAG), 202–222 (LPVT…SIWI), 246–266 (FTLL…GAIL), 281–301 (AGLV…MTGM), 321–341 (LLPA…AVFL), 351–371 (LALT…MYGV), 379–399 (FAAA…TGVA), and 412–432 (IPVF…IAFA). Positions 480–584 (DGVFSAGVMG…DVITPVIVTN (105 aa)) constitute a PTS EIIA type-1 domain. The active-site Tele-phosphohistidine intermediate; for EIIA activity is the His532.

The protein localises to the cell membrane. Its function is as follows. The phosphoenolpyruvate-dependent sugar phosphotransferase system (sugar PTS), a major carbohydrate active -transport system, catalyzes the phosphorylation of incoming sugar substrates concomitantly with their translocation across the cell membrane. This system is involved in beta-glucoside transport. In Bacillus subtilis (strain 168), this protein is PTS system beta-glucoside-specific EIIBCA component (bglP).